Here is a 218-residue protein sequence, read N- to C-terminus: Claudin-3 (218 aa).

Over 1 to 8 (MSMGLEIA) the chain is Cytoplasmic. The helical transmembrane segment at 9 to 29 (GTSLAVLGWLSTIVCCALPMW) threads the bilayer. The Extracellular segment spans residues 30–80 (RVTAFIGSSIITAQITWEGLWMNCVVQSTGQMQCKVYDSLLALPQDLQAAR). A helical transmembrane segment spans residues 81–101 (ALIVVSILLAAFGLLVALVGA). The Cytoplasmic segment spans residues 102-115 (QCTNCVQDDTAKAK). Residues 116 to 136 (ITIVAGVLFLLAALLTLVPVS) form a helical membrane-spanning segment. Over 137–159 (WSANTIIRDFYNPLVPDAQKREM) the chain is Extracellular. Residues 160–180 (GAGLYVGWAAAALQLLGGALL) traverse the membrane as a helical segment. The Cytoplasmic portion of the chain corresponds to 181–218 (CCSCPPRDKKYAPTKIVYSAPRSAGPGTSTAYDRKDYV). A Phosphotyrosine modification is found at Tyr-198. 2 positions are modified to phosphoserine: Ser-199 and Ser-209. The interval 217-218 (YV) is interactions with TJP1, TJP2 and TJP3.

It belongs to the claudin family. Can form homo- and heteropolymers with other CLDN. Homopolymers interact with CLDN1 and CLDN2 homopolymers. Interacts in cis (within the same plasma membrane) with CLDN19. Directly interacts with TJP1/ZO-1, TJP2/ZO-2 and TJP3/ZO-3.

The protein localises to the cell junction. It localises to the tight junction. The protein resides in the cell membrane. Plays a major role in tight junction-specific obliteration of the intercellular space, through calcium-independent cell-adhesion activity. The chain is Claudin-3 (CLDN3) from Canis lupus familiaris (Dog).